The chain runs to 599 residues: Fumarate reductase flavoprotein subunit (599 aa).

FAD-binding positions include G12–G16, V36–K38, T44–G52, H156–V158, and D212. At H45 the chain carries Tele-8alpha-FAD histidine. Active-site residues include H233 and R249. FAD-binding positions include H357–Y358, E381, and R392–L398.

This sequence belongs to the FAD-dependent oxidoreductase 2 family. FRD/SDH subfamily. In terms of assembly, part of an enzyme complex containing four subunits: a flavoprotein (FrdA), an iron-sulfur protein (FrdB), and two hydrophobic anchor proteins (FrdC and FrdD). It depends on FAD as a cofactor.

The protein resides in the cell inner membrane. The enzyme catalyses a quinone + succinate = fumarate + a quinol. The catalysed reaction is a menaquinone + succinate = a menaquinol + fumarate. This is Fumarate reductase flavoprotein subunit (frdA) from Haemophilus influenzae (strain ATCC 51907 / DSM 11121 / KW20 / Rd).